We begin with the raw amino-acid sequence, 202 residues long: ATP-dependent Clp protease proteolytic subunit (202 aa).

Catalysis depends on Ser-98, which acts as the Nucleophile. The active site involves His-123.

The protein belongs to the peptidase S14 family. As to quaternary structure, fourteen ClpP subunits assemble into 2 heptameric rings which stack back to back to give a disk-like structure with a central cavity, resembling the structure of eukaryotic proteasomes.

The protein localises to the cytoplasm. The enzyme catalyses Hydrolysis of proteins to small peptides in the presence of ATP and magnesium. alpha-casein is the usual test substrate. In the absence of ATP, only oligopeptides shorter than five residues are hydrolyzed (such as succinyl-Leu-Tyr-|-NHMec, and Leu-Tyr-Leu-|-Tyr-Trp, in which cleavage of the -Tyr-|-Leu- and -Tyr-|-Trp bonds also occurs).. Cleaves peptides in various proteins in a process that requires ATP hydrolysis. Has a chymotrypsin-like activity. Plays a major role in the degradation of misfolded proteins. The protein is ATP-dependent Clp protease proteolytic subunit of Solidesulfovibrio magneticus (strain ATCC 700980 / DSM 13731 / RS-1) (Desulfovibrio magneticus).